The primary structure comprises 153 residues: Calmodulin-like protein 4 (153 aa).

4 consecutive EF-hand domains span residues 8-43 (DQIN…LGAS), 44-79 (PTPG…QIKQ), 81-116 (DPKK…LGEK), and 117-152 (LTHK…PVRD).

It belongs to the calmodulin family. Interacts with MYO7B; the interaction mediates the association of CALML4 with the IMAC/intermicrovillar adhesion complex. Interacts with MYO7A. As to expression, expressed in the small intestine, in both mature enterocytes on the villus surface and immature cells that reside in the crypt stem-cell niche.

It is found in the cell projection. The protein resides in the microvillus. Functionally, as part of the intermicrovillar adhesion complex/IMAC plays a role in epithelial brush border differentiation, controlling microvilli organization and length. Acts as a light chain for MYO7B and is required for efficient targeting of the IMAC to the tips of border brush microvilli. The chain is Calmodulin-like protein 4 (Calml4) from Mus musculus (Mouse).